The following is a 158-amino-acid chain: 2-C-methyl-D-erythritol 2,4-cyclodiphosphate synthase (158 aa).

A divalent metal cation is bound by residues Asp-9 and His-11. Residues 9 to 11 (DVH) and 35 to 36 (HS) each bind 4-CDP-2-C-methyl-D-erythritol 2-phosphate. His-43 is a binding site for a divalent metal cation. 4-CDP-2-C-methyl-D-erythritol 2-phosphate is bound by residues 57-59 (DIG), 62-66 (FPDTD), 101-107 (AQKPKMA), 133-136 (TTTE), Phe-140, and Arg-143.

This sequence belongs to the IspF family. In terms of assembly, homotrimer. A divalent metal cation serves as cofactor.

It carries out the reaction 4-CDP-2-C-methyl-D-erythritol 2-phosphate = 2-C-methyl-D-erythritol 2,4-cyclic diphosphate + CMP. It functions in the pathway isoprenoid biosynthesis; isopentenyl diphosphate biosynthesis via DXP pathway; isopentenyl diphosphate from 1-deoxy-D-xylulose 5-phosphate: step 4/6. Involved in the biosynthesis of isopentenyl diphosphate (IPP) and dimethylallyl diphosphate (DMAPP), two major building blocks of isoprenoid compounds. Catalyzes the conversion of 4-diphosphocytidyl-2-C-methyl-D-erythritol 2-phosphate (CDP-ME2P) to 2-C-methyl-D-erythritol 2,4-cyclodiphosphate (ME-CPP) with a corresponding release of cytidine 5-monophosphate (CMP). This Bacillus pumilus (strain SAFR-032) protein is 2-C-methyl-D-erythritol 2,4-cyclodiphosphate synthase.